We begin with the raw amino-acid sequence, 492 residues long: Fibroblast growth factor receptor substrate 3 (492 aa).

Residue glycine 2 is the site of N-myristoyl glycine attachment. The IRS-type PTB domain maps to 13–115 (VPHNHPTKFK…QCNSINVTEE (103 aa)). Disordered regions lie at residues 125–205 (PQEL…EDRR), 337–413 (QQLR…EPPR), and 425–492 (WGTA…DLPL). Composition is skewed to polar residues over residues 133-147 (GSSQ…SFSN) and 166-185 (PSTS…QTLI). Residues 374 to 385 (TSTRASARSHSS) show a composition bias toward low complexity.

As to quaternary structure, binds NTRK1, FGFR1, NGFR, GRB2, PTPN11 and ERK2. In terms of processing, phosphorylated on tyrosine residues upon stimulation by BFGF or NGFB.

The protein localises to the membrane. Functionally, adapter protein that links FGF and NGF receptors to downstream signaling pathways. Involved in the activation of MAP kinases. Down-regulates ERK2 signaling by interfering with the phosphorylation and nuclear translocation of ERK2. This is Fibroblast growth factor receptor substrate 3 (Frs3) from Rattus norvegicus (Rat).